Consider the following 642-residue polypeptide: Tigger transposable element-derived protein 5 (642 aa).

2 stretches are compositionally biased toward pro residues: residues M1 to P10 and L19 to R43. The segment at M1–R45 is disordered. One can recognise an HTH psq-type domain in the interval A47–L98. DNA-binding regions (H-T-H motif) lie at residues Q74–D94 and P145–R178. An HTH CENPB-type domain is found at Q112–R185. The disordered stretch occupies residues R185–D233. Pro residues-rich tracts occupy residues P192–P202 and D218–A227. DDE-1 domains lie at D233–V357 and R410–W477. Positions L535–T587 are disordered. Residues A552 to A562 are compositionally biased toward pro residues.

The protein belongs to the tigger transposable element derived protein family.

The protein resides in the nucleus. The protein is Tigger transposable element-derived protein 5 (TIGD5) of Homo sapiens (Human).